The primary structure comprises 359 residues: DNA replication and repair protein RecF (359 aa).

30 to 37 (GPNGSGKT) is a binding site for ATP.

The protein belongs to the RecF family.

It is found in the cytoplasm. Functionally, the RecF protein is involved in DNA metabolism; it is required for DNA replication and normal SOS inducibility. RecF binds preferentially to single-stranded, linear DNA. It also seems to bind ATP. This is DNA replication and repair protein RecF from Vibrio vulnificus (strain YJ016).